A 317-amino-acid polypeptide reads, in one-letter code: MKKTSNKVVLVGTGAVGMSFIYSAVNQGLAEEYVLIDVNTKAAEGNAIDIQDTMAVLDKPFTIKAGTYEDCKDADLIVITAGRPQRPGETRLELIADNSRIMKGIAEAIKASGFNGVTVIASNPCDVLTTVYQQVTGYDEHSVVGAGTTLDSARLRRLVAEKLNVAPKSVNAYIMGEHGDSSVAAYSKATVMGQPISKYLAEGKITEADLEECWTRAIRMAYEIIERKGATYYGIGVCLNAISSAILRDEKTTFMVGAKLNGEYGQKGFYTGVPVILGSKGWETIIEWDLSDAEKAAFKKSCDALDATYQKAKEAIA.

NAD(+) contacts are provided by V16, D37, and Y68. Substrate-binding positions include Q85, R91, 123 to 126, and 151 to 154; these read NPCD and DSAR. Residue 121–123 participates in NAD(+) binding; that stretch reads ASN. H178 (proton acceptor) is an active-site residue. Y222 is subject to Phosphotyrosine. T231 serves as a coordination point for substrate.

Belongs to the LDH/MDH superfamily. LDH family. Homotetramer.

Its subcellular location is the cytoplasm. It catalyses the reaction (S)-lactate + NAD(+) = pyruvate + NADH + H(+). The protein operates within fermentation; pyruvate fermentation to lactate; (S)-lactate from pyruvate: step 1/1. In terms of biological role, catalyzes the conversion of lactate to pyruvate. This is L-lactate dehydrogenase from Mesoplasma florum (strain ATCC 33453 / NBRC 100688 / NCTC 11704 / L1) (Acholeplasma florum).